The following is a 183-amino-acid chain: Bifunctional protein PyrR (183 aa).

Positions 102 to 114 (VVLVDDVLYTGRT) match the PRPP-binding motif.

The protein belongs to the purine/pyrimidine phosphoribosyltransferase family. PyrR subfamily. In terms of assembly, homodimer and homohexamer; in equilibrium.

The catalysed reaction is UMP + diphosphate = 5-phospho-alpha-D-ribose 1-diphosphate + uracil. Functionally, regulates transcriptional attenuation of the pyrimidine nucleotide (pyr) operon by binding in a uridine-dependent manner to specific sites on pyr mRNA. This disrupts an antiterminator hairpin in the RNA and favors formation of a downstream transcription terminator, leading to a reduced expression of downstream genes. Also displays a weak uracil phosphoribosyltransferase activity which is not physiologically significant. This Listeria monocytogenes serotype 4a (strain HCC23) protein is Bifunctional protein PyrR.